The sequence spans 556 residues: Solute carrier family 22 member 1 (556 aa).

Residues 1 to 21 (MPTVDDVLEQVGEFGWFQKQA) lie on the Cytoplasmic side of the membrane. The chain crosses the membrane as a helical span at residues 22–42 (FLLLCLISASLAPIYVGIVFL). The Extracellular portion of the chain corresponds to 43 to 150 (GFTPGHYCQN…LVCGDAWKVD (108 aa)). Residue Asn71 is glycosylated (N-linked (GlcNAc...) asparagine). The chain crosses the membrane as a helical span at residues 151-171 (LFQSCVNLGFFLGSLVVGYIA). The Cytoplasmic segment spans residues 172 to 177 (DRFGRK). A helical membrane pass occupies residues 178–198 (LCLLVTTLVTSVSGVLTAVAP). Over 199-211 (DYTSMLLFRLLQG) the chain is Extracellular. The helical transmembrane segment at 212–231 (MVSKGSWVSGYTLITEFVGS) threads the bilayer. Residues 232 to 238 (GYRRTTA) are Cytoplasmic-facing. A helical transmembrane segment spans residues 239-259 (ILYQMAFTVGLVGLAGVAYAI). The Extracellular portion of the chain corresponds to 260-263 (PDWR). A helical transmembrane segment spans residues 264 to 284 (WLQLAVSLPTFLFLLYYWFVP). The Proline-rich sequence motif lies at 284–288 (PESPR). At 285 to 348 (ESPRWLLSQK…FRTPNLRKHT (64 aa)) the chain is on the cytoplasmic side. Ser334 bears the Phosphoserine mark. A helical membrane pass occupies residues 349 to 369 (VILMYLWFSCAVLYQGLIMHV). Residues 370–377 (GATGANLY) lie on the Extracellular side of the membrane. A helical membrane pass occupies residues 378-398 (LDFFYSSLVEFPAAFIILVTI). The Cytoplasmic portion of the chain corresponds to 399-403 (DRIGR). Residues 404 to 424 (IYPIAASNLVTGAACLLMIFI) form a helical membrane-spanning segment. Residues 425-429 (PHELH) are Extracellular-facing. A helical transmembrane segment spans residues 430 to 452 (WLNVTLACLGRMGATIVLQMVCL). Residues 453–465 (VNAELYPTFIRNL) lie on the Cytoplasmic side of the membrane. Residues 466–486 (GMMVCSALCDLGGIFTPFMVF) form a helical membrane-spanning segment. The Extracellular portion of the chain corresponds to 487 to 493 (RLMEVWQ). The chain crosses the membrane as a helical span at residues 494–514 (ALPLILFGVLGLTAGAMTLLL). Over 515 to 556 (PETKGVALPETIEEAENLGRRKSKAKENTIYLQVQTGKSSST) the chain is Cytoplasmic. A Phosphothreonine modification is found at Thr543.

It belongs to the major facilitator (TC 2.A.1) superfamily. Organic cation transporter (TC 2.A.1.19) family. In terms of processing, phosphorylated. Expressed in kidney cortex in S1, S2 segments of renal proximal tubules as well as in kidney medulla. Expressed throughout the liver lobuli, in hepatocytes surrounding the central veins. Expressed in enterocytes of villi and crypts in small intestine. Expressed in brain, in some white matter regions like the corpus callosum and in the granular layer of the cerebellum. Expressed in Sertoli cells in testis. Expressed in colon. Expressed in tracheal and bronchial ciliated epithelium in the respiratory tract. Expressed in spleen, moderately in skin, and weakly in the gastrointestinal tract, lung, thymus, muscle, and prostate. In terms of tissue distribution, expressed in kidney cortex and medulla. Expressed in intestine, liver and colon.

It localises to the basolateral cell membrane. The protein resides in the apical cell membrane. The protein localises to the lateral cell membrane. It is found in the basal cell membrane. Its subcellular location is the cell membrane. It catalyses the reaction 1-methylnicotinamide(out) = 1-methylnicotinamide(in). The catalysed reaction is dopamine(out) = dopamine(in). It carries out the reaction serotonin(out) = serotonin(in). The enzyme catalyses (R)-adrenaline(out) = (R)-adrenaline(in). It catalyses the reaction (R)-noradrenaline(out) = (R)-noradrenaline(in). The catalysed reaction is histamine(out) = histamine(in). It carries out the reaction guanidine(out) = guanidine(in). The enzyme catalyses choline(out) = choline(in). It catalyses the reaction acetylcholine(in) = acetylcholine(out). The catalysed reaction is thiamine(in) = thiamine(out). It carries out the reaction agmatine(out) = agmatine(in). The enzyme catalyses putrescine(out) = putrescine(in). It catalyses the reaction spermidine(in) = spermidine(out). The catalysed reaction is (R)-carnitine(in) = (R)-carnitine(out). It carries out the reaction O-isobutanoyl-(R)-carnitine(in) = O-isobutanoyl-(R)-carnitine(out). The enzyme catalyses O-acetyl-(R)-carnitine(in) = O-acetyl-(R)-carnitine(out). It catalyses the reaction O-3-hydroxybutanoyl-(R)-carnitine(in) = O-3-hydroxybutanoyl-(R)-carnitine(out). The catalysed reaction is O-propanoyl-(R)-carnitine(in) = O-propanoyl-(R)-carnitine(out). It carries out the reaction O-butanoyl-(R)-carnitine(in) = O-butanoyl-(R)-carnitine(out). The enzyme catalyses O-2-methylbutanoyl-(R)-carnitine(in) = O-2-methylbutanoyl-(R)-carnitine(out). It catalyses the reaction O-3-methylbutanoyl-(R)-carnitine(in) = O-3-methylbutanoyl-(R)-carnitine(out). The catalysed reaction is O-hexanoyl-(R)-carnitine(in) = O-hexanoyl-(R)-carnitine(out). It carries out the reaction L-histidyl-L-proline diketopiperazine(in) = L-histidyl-L-proline diketopiperazine(out). The enzyme catalyses (R)-salsolinol(in) = (R)-salsolinol(out). It catalyses the reaction prostaglandin F2alpha(out) = prostaglandin F2alpha(in). The catalysed reaction is prostaglandin E2(out) = prostaglandin E2(in). Phosphorylation of the transporter leads to changes in its substrate affinity, resulting in a regulation of the transport activity. In contrast with human ortholog, ASP uptake is stimulated by protein kinase A (PKA) and C (PKC) and endogenous tyrosine kinase activation. ASP affinity is induced by PKC-dependent phosphorylation. Inhibited by cGMP, most likely through a cGMP-binding protein that interacts with OCT1. Functionally, electrogenic voltage-dependent transporter that mediates the transport of a variety of organic cations such as endogenous bioactive amines, cationic drugs and xenobiotics. Functions as a pH- and Na(+)-independent, bidirectional transporter. Cation cellular uptake or release is driven by the electrochemical potential (i.e. membrane potential and concentration gradient) and substrate selectivity. Hydrophobicity is a major requirement for recognition in polyvalent substrates and inhibitors. Primarily expressed in the basolateral membrane of hepatocytes and proximal tubules and involved in the uptake and disposition of cationic compounds from the blood by hepatic and renal clearance. Most likely functions as an uptake carrier in enterocytes contributing to the intestinal excretion and elimination of organic cations from the systemic circulation. Transports endogenous monoamines such as N-1-methylnicotinamide (NMN), guanidine, neurotransmitters dopamine, serotonin, noradrenaline, adrenaline and histamine, and quaternary ammonium compound such as choline. Also transports natural polyamines such as spermidine, agmatine and putrescine at low affinity, but relatively high turnover. Involved in the hepatic uptake of vitamin B1/thiamine, hence regulating hepatic lipid and energy metabolism. Contributes to the influx and efflux of fatty acid carriers carnitines and acylcarnitines across the basolateral membrane of hepatocytes, from the liver to the systemic circulation and inversely and may be involved in regulating the systemic availability of hepatic acylcarnitines. Mediates the bidirectional transport of acetylcholine (ACh) at the apical membrane of ciliated cell in airway epithelium, thereby playing a role in luminal release of ACh from bronchial epithelium. Transports dopaminergic neuromodulators cyclo(his-pro) and salsolinol with lower efficency. Also capable of transporting non-amine endogenous compounds such as prostaglandin E2 (PGE2) and prostaglandin F2-alpha (PGF2-alpha). May contribute to the transport of cationic compounds in testis across the blood-testis-barrier. Also mediates the uptake of xenobiotics tributylmethylammonium (TBuMA), quinidine, N-methyl-quinine (NMQ), N-methyl-quinidine (NMQD) N-(4,4-azo-n-pentyl)-quinuclidine (APQ), azidoprocainamide methoiodide (AMP), N-(4,4-azo-n-pentyl)-21-deoxyajmalinium (APDA) and 4-(4-(dimethylamino)styryl)-N-methylpyridinium (ASP). Functional isoform capable of transporting TEA. In Rattus norvegicus (Rat), this protein is Solute carrier family 22 member 1.